The chain runs to 386 residues: Glutamate 5-kinase (386 aa).

K28 contacts ATP. Substrate-binding residues include S68, D155, and N167. 187–188 contacts ATP; it reads TD. Positions 294–372 constitute a PUA domain; the sequence is RGRLVLDDGA…EKIESILGYI (79 aa).

Belongs to the glutamate 5-kinase family.

The protein resides in the cytoplasm. The catalysed reaction is L-glutamate + ATP = L-glutamyl 5-phosphate + ADP. It participates in amino-acid biosynthesis; L-proline biosynthesis; L-glutamate 5-semialdehyde from L-glutamate: step 1/2. In terms of biological role, catalyzes the transfer of a phosphate group to glutamate to form L-glutamate 5-phosphate. The protein is Glutamate 5-kinase of Hahella chejuensis (strain KCTC 2396).